The following is a 463-amino-acid chain: Probable mannan endo-1,4-beta-mannosidase F (463 aa).

The first 18 residues, 1-18 (MRSLSSIALLSVVGAASA), serve as a signal peptide directing secretion. A CBM1 domain is found at 19–54 (QAGPWAQCGGKSFSGSSECASGWKCQELNEWFSQCV). The tract at residues 57-78 (AESTTPTVSSTPTPTDAPSVSI) is disordered. The span at 59–77 (STTPTVSSTPTPTDAPSVS) shows a compositional bias: low complexity. The interval 75 to 118 (SVSITASATTGINKSISVSSASKSTPLPSSSSASPSPRPTGSGS) is ser-rich linker. Asn-87 carries N-linked (GlcNAc...) asparagine glycosylation. A compositionally biased stretch (low complexity) spans 93–118 (SSASKSTPLPSSSSASPSPRPTGSGS). A disordered region spans residues 93–121 (SSASKSTPLPSSSSASPSPRPTGSGSFAK). The interval 119-463 (FAKADGLQFS…MDHMENVNKN (345 aa)) is catalytic. The substrate site is built by Trp-171 and Asn-285. Glu-286 serves as the catalytic Proton donor. Tyr-361 serves as a coordination point for substrate. Glu-395 (nucleophile) is an active-site residue. Trp-424 contacts substrate.

It belongs to the glycosyl hydrolase 5 (cellulase A) family.

Its subcellular location is the secreted. It catalyses the reaction Random hydrolysis of (1-&gt;4)-beta-D-mannosidic linkages in mannans, galactomannans and glucomannans.. Endo-1,4-mannanase, a crucial enzyme for depolymerization of seed galactomannans and wood galactoglucomannans. This Aspergillus flavus (strain ATCC 200026 / FGSC A1120 / IAM 13836 / NRRL 3357 / JCM 12722 / SRRC 167) protein is Probable mannan endo-1,4-beta-mannosidase F (manF).